The primary structure comprises 692 residues: MAREFSLEKTRNIGIMAHIDAGKTTTTERILFYTGRIHKIGETHEGASQMDWMEQEQERGITITSAATTAQWKGYRVNIIDTPGHVDFTVEVERSLRVLDGAVAVLDAQSGVEPQTETVWRQATTYGVPRVVFVNKMDKIGADFLYSVGTLRDRLQANAHAIQLPIGAEDNFEGIIDLVENVAYFYEDDLGTRSDAKEIPEEYKEQAEELRSSLIEAVAELDEELMEKYLEGEEITIPELKAAIRKGTLNVEFYPVLVGSAFKNKGVQLVLDAVLDYLPAPTDVAAIKGVRPDTDEEIVRHSSDEEPFSALAFKVMTDPYVGKLTFFRVYSGTLDSGSYVKNSTKGKRERVGRILQMHANSREEISTVYAGDIAAAVGLKDTSTGDTLCDEKDLVILESMEFPEPVIDVAIEPKSKADQDKMGIALAKLAEEDPTFRTQTNPETGQTIISGMGELHLDIIVDRMKREFKVEANVGAPQVAYRETFRTGAKVEGKFVRQSGGRGQFGHVWIEFEPNEEGAGFEFENAIVGGVVPREYIPAVQAGLEDSLENGVLAGFPLIDIKAKLFDGSYHDVDSNEMAFKVAASMALKNAVSKCNPVLLEPIMKVEVVIPEEYMGDIMGDVTSRRGRVEGMEARGNAQVVRAMVPLAEMFGYATALRSNTQGRGTFTMFMDHYEEVPKSIAEEIIKKNKGE.

A tr-type G domain is found at glutamate 8–threonine 282. GTP is bound by residues alanine 17–threonine 24, aspartate 81–histidine 85, and asparagine 135–aspartate 138.

Belongs to the TRAFAC class translation factor GTPase superfamily. Classic translation factor GTPase family. EF-G/EF-2 subfamily.

Its subcellular location is the cytoplasm. Functionally, catalyzes the GTP-dependent ribosomal translocation step during translation elongation. During this step, the ribosome changes from the pre-translocational (PRE) to the post-translocational (POST) state as the newly formed A-site-bound peptidyl-tRNA and P-site-bound deacylated tRNA move to the P and E sites, respectively. Catalyzes the coordinated movement of the two tRNA molecules, the mRNA and conformational changes in the ribosome. This Bacillus velezensis (strain DSM 23117 / BGSC 10A6 / LMG 26770 / FZB42) (Bacillus amyloliquefaciens subsp. plantarum) protein is Elongation factor G.